The following is a 201-amino-acid chain: Small ribosomal subunit protein uS10m (201 aa).

The protein belongs to the universal ribosomal protein uS10 family. In terms of assembly, component of the mitochondrial ribosome small subunit (28S) which comprises a 12S rRNA and about 30 distinct proteins.

It localises to the mitochondrion. The chain is Small ribosomal subunit protein uS10m (MRPS10) from Pongo abelii (Sumatran orangutan).